A 397-amino-acid chain; its full sequence is SET domain-containing protein 4 (397 aa).

An SET domain is found at 29 to 245 (AKLEPCRFKE…KCSEVFINYG (217 aa)). Residue Y244 participates in S-adenosyl-L-methionine binding.

It belongs to the class V-like SAM-binding methyltransferase superfamily. SETD4 family.

It is found in the nucleus. It catalyses the reaction L-lysyl(79)-[histone H3] + 3 S-adenosyl-L-methionine = N(6),N(6),N(6)-trimethyl-L-lysyl(79)-[histone H3] + 3 S-adenosyl-L-homocysteine + 3 H(+). The enzyme catalyses L-lysyl(20)-[histone H4] + S-adenosyl-L-methionine = N(6)-methyl-L-lysyl(20)-[histone H4] + S-adenosyl-L-homocysteine + H(+). The catalysed reaction is N(6)-methyl-L-lysyl(20)-[histone H4] + S-adenosyl-L-methionine = N(6),N(6)-dimethyl-L-lysyl(20)-[histone H4] + S-adenosyl-L-homocysteine + H(+). It carries out the reaction N(6),N(6)-dimethyl-L-lysyl(20)-[histone H4] + S-adenosyl-L-methionine = N(6),N(6),N(6)-trimethyl-L-lysyl(20)-[histone H4] + S-adenosyl-L-homocysteine + H(+). In terms of biological role, protein-lysine N-methyltransferase involved in the regulation of cell quiescence by catalyzing the trimethylation of 'Lys-20' of histone H4 and 'Lys-79' of histone H3 (H4K20me3 and H3K79me3, respectively) during diapause formation, a state of obligate dormancy. The sequence is that of SET domain-containing protein 4 from Artemia parthenogenetica (Brine shrimp).